Consider the following 122-residue polypeptide: Large ribosomal subunit protein bL12 (122 aa).

This sequence belongs to the bacterial ribosomal protein bL12 family. Homodimer. Part of the ribosomal stalk of the 50S ribosomal subunit. Forms a multimeric L10(L12)X complex, where L10 forms an elongated spine to which 2 to 4 L12 dimers bind in a sequential fashion. Binds GTP-bound translation factors.

Forms part of the ribosomal stalk which helps the ribosome interact with GTP-bound translation factors. Is thus essential for accurate translation. This chain is Large ribosomal subunit protein bL12, found in Staphylococcus epidermidis (strain ATCC 35984 / DSM 28319 / BCRC 17069 / CCUG 31568 / BM 3577 / RP62A).